We begin with the raw amino-acid sequence, 539 residues long: uncharacterized protein (539 aa).

Residues 316 to 433 (AEHHHQKGKK…ATVERSSPPE (118 aa)) form a disordered region. The segment covering 318 to 352 (HHHQKGKKVPATHRRSSTPHARKTAGTRARTRARK) has biased composition (basic residues). Residues 362-384 (KISKKDSGESKQKDETAGMERVF) are compositionally biased toward basic and acidic residues. Over residues 390–402 (NVRTCSSRASRTG) the composition is skewed to polar residues.

This is an uncharacterized protein from Treponema pallidum (strain Nichols).